Consider the following 359-residue polypeptide: NADPH HC-toxin reductase 2 (359 aa).

Residues arginine 39, 67–68 (DL), 87–89 (VAT), tyrosine 177, lysine 181, 206–209 (LGLV), and threonine 221 each bind NADP(+). Lysine 181 functions as the Proton donor in the catalytic mechanism.

This sequence belongs to the NAD(P)-dependent epimerase/dehydratase family.

Functionally, in tandem with Hm1, NADPH-dependent HC toxin reductase (HCTR), which inactivates HC toxin, a cyclic tetrapeptide produced by the fungus Cochliobolus carbonum to permit infection and acting as an inhibitor of host histone deacetylases (HDACs), thus conferring resistance against C.carbonum race 1 in resistant cultivars (e.g. cv. B73 and cv. Wisconsin 22). Catalyzes the production of 8-hydroxy derivative of HC-toxin via the reduction of the 8-keto group of 2-amino-9,10-epoxy-8-oxo-decanoic acid, an amino acid of the HC-toxin. In Zea mays (Maize), this protein is NADPH HC-toxin reductase 2.